The following is a 60-amino-acid chain: Large ribosomal subunit protein bL32 (60 aa).

The segment at 1 to 60 is disordered; it reads MAVQQNKKSPSKRGMHRSHDFLVNPSTAIEPTTGETHLRHHISPNGFYRGRKVLKTKADE. The span at 24–35 shows a compositional bias: polar residues; sequence NPSTAIEPTTGE. Basic residues predominate over residues 49 to 60; that stretch reads RGRKVLKTKADE.

This sequence belongs to the bacterial ribosomal protein bL32 family.

The protein is Large ribosomal subunit protein bL32 of Bordetella petrii (strain ATCC BAA-461 / DSM 12804 / CCUG 43448).